Consider the following 286-residue polypeptide: Bifunctional protein FolD (286 aa).

NADP(+)-binding positions include 165–167 and Ser190; that span reads GRS.

The protein belongs to the tetrahydrofolate dehydrogenase/cyclohydrolase family. In terms of assembly, homodimer.

It catalyses the reaction (6R)-5,10-methylene-5,6,7,8-tetrahydrofolate + NADP(+) = (6R)-5,10-methenyltetrahydrofolate + NADPH. The enzyme catalyses (6R)-5,10-methenyltetrahydrofolate + H2O = (6R)-10-formyltetrahydrofolate + H(+). It participates in one-carbon metabolism; tetrahydrofolate interconversion. Its function is as follows. Catalyzes the oxidation of 5,10-methylenetetrahydrofolate to 5,10-methenyltetrahydrofolate and then the hydrolysis of 5,10-methenyltetrahydrofolate to 10-formyltetrahydrofolate. This Paraburkholderia xenovorans (strain LB400) protein is Bifunctional protein FolD.